An 80-amino-acid polypeptide reads, in one-letter code: Venom protein HGE029 (80 aa).

The N-terminal stretch at 1–22 (MNAKAFLAIFMIALLITDRAEA) is a signal peptide.

Belongs to the non-disulfide-bridged peptide (NDBP) superfamily. Long chain multifunctional peptide (group 2) family. In terms of tissue distribution, expressed by the venom gland.

Its subcellular location is the secreted. This is Venom protein HGE029 from Hoffmannihadrurus gertschi (Scorpion).